The sequence spans 161 residues: Nucleotide-binding protein BceJ2315_27070 (161 aa).

It belongs to the YajQ family.

In terms of biological role, nucleotide-binding protein. The sequence is that of Nucleotide-binding protein BceJ2315_27070 from Burkholderia cenocepacia (strain ATCC BAA-245 / DSM 16553 / LMG 16656 / NCTC 13227 / J2315 / CF5610) (Burkholderia cepacia (strain J2315)).